An 88-amino-acid polypeptide reads, in one-letter code: Kunitz-type serine protease inhibitor Hg1 (88 aa).

An N-terminal signal peptide occupies residues 1–21; sequence MIIFYGLFSILVLTSINIAEA. The BPTI/Kunitz inhibitor domain maps to 29-79; the sequence is CLLPPKTGPCKGSFARYYFDIETGSCKAFIYGGCEGNSNNFSEKHHCEKRC. Cystine bridges form between C29-C79, C38-C62, and C54-C75. N-linked (GlcNAc...) asparagine glycosylation is present at N68.

Belongs to the venom Kunitz-type family. Scorpion delta-Ktx subfamily. Delta-Ktx 1 sub-subfamily. Expressed by the venom gland.

It localises to the secreted. Functionally, dual-function toxin that inhibits trypsin at a molar ratio of 1:1 (Ki=107 nM) and inhibits mKv1.3/KCNA3 potassium channels (IC(50)=6.2 nM, and inhibits 80% of currents at 1 uM). The protein is Kunitz-type serine protease inhibitor Hg1 of Hoffmannihadrurus gertschi (Scorpion).